Reading from the N-terminus, the 79-residue chain is Cytochrome c oxidase subunit 7A1, mitochondrial (79 aa).

A mitochondrion-targeting transit peptide spans 1 to 21; it reads MQALRVSRALIRSFNTTARNR. The Mitochondrial matrix segment spans residues 22-46; that stretch reads FQNRVPEKQKLFQEDNDIPLYLKGG. The helical transmembrane segment at 47 to 75 threads the bilayer; the sequence is IVDNILYRVTMGLCLGGSAYSMYCLGWAS. The Mitochondrial intermembrane segment spans residues 76–79; the sequence is FPRN.

It belongs to the cytochrome c oxidase VIIa family. As to quaternary structure, component of the complex IV (CIV, cytochrome c oxidase), a multisubunit enzyme composed of 14 subunits. The complex is composed of a catalytic core of 3 subunits MT-CO1, MT-CO2 and MT-CO3, encoded in the mitochondrial DNA, and 11 supernumerary subunits COX4I1 (or COX4I2), COX5A, COX5B, COX6A2 (or COX6A1), COX6B1 (or COX6B2), COX6C, COX7A1 (or COX7A2), COX7B, COX7C, COX8B and NDUFA4, which are encoded in the nuclear genome. The complex exists as a monomer or a dimer and forms supercomplexes (SCs) in the inner mitochondrial membrane with NADH-ubiquinone oxidoreductase (complex I, CI) and ubiquinol-cytochrome c oxidoreductase (cytochrome b-c1 complex, complex III, CIII), resulting in different assemblies (supercomplex SCI(1)III(2)IV(1) and megacomplex MCI(2)III(2)IV(2)).

Its subcellular location is the mitochondrion inner membrane. It functions in the pathway energy metabolism; oxidative phosphorylation. In terms of biological role, component of the mitochondrial respiratory complex IV (CIV, also named cytochrome c oxidase complex), the last enzyme in the mitochondrial electron transport chain which drives oxidative phosphorylation. The CIV complex is the component of the respiratory chain that catalyzes the reduction of oxygen to water. Acts as an assembly factor that specifically drives the homodimerization of CIV complexes, mediating the formation of mitochondrial respiratory supercomplexes (respirasomes) containing two CIV: supercomplxes with two molecules of CIV show improved activity. Despite being highly expressed in brown adipose tissue, not required for thermogenesis. The polypeptide is Cytochrome c oxidase subunit 7A1, mitochondrial (COX7A1) (Trachypithecus cristatus (Silvered leaf-monkey)).